We begin with the raw amino-acid sequence, 444 residues long: Phosphoglucosamine mutase (444 aa).

S104 (phosphoserine intermediate) is an active-site residue. S104, D243, D245, and D247 together coordinate Mg(2+). S104 is subject to Phosphoserine.

This sequence belongs to the phosphohexose mutase family. The cofactor is Mg(2+). Activated by phosphorylation.

It catalyses the reaction alpha-D-glucosamine 1-phosphate = D-glucosamine 6-phosphate. Its function is as follows. Catalyzes the conversion of glucosamine-6-phosphate to glucosamine-1-phosphate. This chain is Phosphoglucosamine mutase, found in Neisseria meningitidis serogroup A / serotype 4A (strain DSM 15465 / Z2491).